The sequence spans 515 residues: MLQPYKHEPFTDFTVEANRKAFEEALGLVEKELGKEYPLIINGERVTTEDKIQSWNPARKDQLVGSVSKANQDLAEKAIQSADEAFQTWRNVNPEERANILVKAAAIIRRRKHEFSAWLVHEAGKPWKEADADTAEAIDFLEYYARQMIELNRGKEILSRPGEQNRYFYTPMGVTVTISPWNFALAIMVGTAVAPIVTGNTVVLKPASTTPVVAAKFVEVLEDAGLPKGVINYVPGSGAEVGDYLVDHPKTSLITFTGSKDVGVRLYERAAVVRPGQNHLKRVIVEMGGKDTVVVDRDADLDLAAESILVSAFGFSGQKCSAGSRAVIHKDVYDEVLEKTVALAKNLTVGDPTNRDNYMGPVIDEKAFEKIMSYIEIGKKEGRLMTGGEGDSSTGFFIQPTIIADLDPEAVIMQEEIFGPVVAFSKANDFDHALEIANNTEYGLTGAVITRNRAHIEQAKREFHVGNLYFNRNCTGAIVGYHPFGGFKMSGTDSKAGGPDYLALHMQAKTVSEMY.

Catalysis depends on residues Glu-286 and Cys-320.

This sequence belongs to the aldehyde dehydrogenase family. RocA subfamily.

It carries out the reaction L-glutamate 5-semialdehyde + NAD(+) + H2O = L-glutamate + NADH + 2 H(+). Its pathway is amino-acid degradation; L-proline degradation into L-glutamate; L-glutamate from L-proline: step 2/2. The polypeptide is 1-pyrroline-5-carboxylate dehydrogenase 1 (rocA1) (Halalkalibacterium halodurans (strain ATCC BAA-125 / DSM 18197 / FERM 7344 / JCM 9153 / C-125) (Bacillus halodurans)).